We begin with the raw amino-acid sequence, 238 residues long: Aspartate/glutamate leucyltransferase (238 aa).

The protein belongs to the R-transferase family. Bpt subfamily.

The protein resides in the cytoplasm. The catalysed reaction is N-terminal L-glutamyl-[protein] + L-leucyl-tRNA(Leu) = N-terminal L-leucyl-L-glutamyl-[protein] + tRNA(Leu) + H(+). It carries out the reaction N-terminal L-aspartyl-[protein] + L-leucyl-tRNA(Leu) = N-terminal L-leucyl-L-aspartyl-[protein] + tRNA(Leu) + H(+). In terms of biological role, functions in the N-end rule pathway of protein degradation where it conjugates Leu from its aminoacyl-tRNA to the N-termini of proteins containing an N-terminal aspartate or glutamate. This chain is Aspartate/glutamate leucyltransferase, found in Shewanella sp. (strain MR-7).